The chain runs to 484 residues: uncharacterized protein (484 aa).

The FAD-binding PCMH-type domain occupies 47 to 226 (TLPIPAAVVK…TEVTVKIFKF (180 aa)).

The protein belongs to the FAD-binding oxidoreductase/transferase type 4 family.

This is an uncharacterized protein from Escherichia coli (strain K12).